The primary structure comprises 325 residues: Acetyl-coenzyme A carboxylase carboxyl transferase subunit alpha (325 aa).

Residues 38-292 (RLEERLSKLQ…DGILKETLKS (255 aa)) enclose the CoA carboxyltransferase C-terminal domain.

Belongs to the AccA family. Acetyl-CoA carboxylase is a heterohexamer composed of biotin carboxyl carrier protein (AccB), biotin carboxylase (AccC) and two subunits each of ACCase subunit alpha (AccA) and ACCase subunit beta (AccD).

Its subcellular location is the cytoplasm. The catalysed reaction is N(6)-carboxybiotinyl-L-lysyl-[protein] + acetyl-CoA = N(6)-biotinyl-L-lysyl-[protein] + malonyl-CoA. The protein operates within lipid metabolism; malonyl-CoA biosynthesis; malonyl-CoA from acetyl-CoA: step 1/1. Functionally, component of the acetyl coenzyme A carboxylase (ACC) complex. First, biotin carboxylase catalyzes the carboxylation of biotin on its carrier protein (BCCP) and then the CO(2) group is transferred by the carboxyltransferase to acetyl-CoA to form malonyl-CoA. This chain is Acetyl-coenzyme A carboxylase carboxyl transferase subunit alpha, found in Bacillus velezensis (strain DSM 23117 / BGSC 10A6 / LMG 26770 / FZB42) (Bacillus amyloliquefaciens subsp. plantarum).